Reading from the N-terminus, the 401-residue chain is MEKKKVVLAYSGGLDTSVAIKWLQEKNYDIIALCLDLGEGKDLAFVKEKALSVGAIKSYMIDVQEEYANEYALIAMQAHTLYEGKYPLVSALSRPLIAKKLVEIAEQEGASAVAHGCTGKGNDQVRFEVSIQALNPYLEVIAPVREWKWSREEEIAYAKENDIPIPINLDSPFSIDQNLWGRSNECGILEDPWAAPPEEAYEMTLALEDTPNKPEFVEIGFEAGVPTTLNGTAYSLSELIKTLNALAGKHGVGRIDHVENRLVGIKSREVYECPAAMTLITAHKELEDLTLVKEVAHFKPMIEQKLTELIYNGLWFSPLKQALNAFLQETQKNVTGTVRVKLFKGHAIVEGRKSEYSLYDEKLATYTAQDEFNHDAAVGFISLFGLPTKVYSQVNQKKVEA.

9-17 (AYSGGLDTS) contacts ATP. Y86 is a binding site for L-citrulline. ATP is bound at residue G116. The L-aspartate site is built by T118, N122, and D123. N122 is a binding site for L-citrulline. Residues R126, S174, S183, E259, and Y271 each coordinate L-citrulline.

The protein belongs to the argininosuccinate synthase family. Type 1 subfamily. In terms of assembly, homotetramer.

Its subcellular location is the cytoplasm. It catalyses the reaction L-citrulline + L-aspartate + ATP = 2-(N(omega)-L-arginino)succinate + AMP + diphosphate + H(+). Its pathway is amino-acid biosynthesis; L-arginine biosynthesis; L-arginine from L-ornithine and carbamoyl phosphate: step 2/3. The sequence is that of Argininosuccinate synthase from Bacillus mycoides (strain KBAB4) (Bacillus weihenstephanensis).